The following is a 339-amino-acid chain: Holliday junction branch migration complex subunit RuvB (339 aa).

The segment at 1–181 is large ATPase domain (RuvB-L); that stretch reads MEERLVSGYE…FGMVHRLEFY (181 aa). ATP-binding positions include Leu20, Arg21, Gly62, Lys65, Thr66, Thr67, 128–130, Arg171, Tyr181, and Arg218; that span reads EDF. Thr66 is a binding site for Mg(2+). The segment at 182 to 252 is small ATPAse domain (RuvB-S); sequence SVEELMLIIN…NAKAALDLLE (71 aa). The head domain (RuvB-H) stretch occupies residues 255–339; the sequence is ELGLDPTDRL…NKNAGELSLW (85 aa). DNA contacts are provided by Arg310 and Arg315.

This sequence belongs to the RuvB family. In terms of assembly, homohexamer. Forms an RuvA(8)-RuvB(12)-Holliday junction (HJ) complex. HJ DNA is sandwiched between 2 RuvA tetramers; dsDNA enters through RuvA and exits via RuvB. An RuvB hexamer assembles on each DNA strand where it exits the tetramer. Each RuvB hexamer is contacted by two RuvA subunits (via domain III) on 2 adjacent RuvB subunits; this complex drives branch migration. In the full resolvosome a probable DNA-RuvA(4)-RuvB(12)-RuvC(2) complex forms which resolves the HJ.

Its subcellular location is the cytoplasm. It catalyses the reaction ATP + H2O = ADP + phosphate + H(+). In terms of biological role, the RuvA-RuvB-RuvC complex processes Holliday junction (HJ) DNA during genetic recombination and DNA repair, while the RuvA-RuvB complex plays an important role in the rescue of blocked DNA replication forks via replication fork reversal (RFR). RuvA specifically binds to HJ cruciform DNA, conferring on it an open structure. The RuvB hexamer acts as an ATP-dependent pump, pulling dsDNA into and through the RuvAB complex. RuvB forms 2 homohexamers on either side of HJ DNA bound by 1 or 2 RuvA tetramers; 4 subunits per hexamer contact DNA at a time. Coordinated motions by a converter formed by DNA-disengaged RuvB subunits stimulates ATP hydrolysis and nucleotide exchange. Immobilization of the converter enables RuvB to convert the ATP-contained energy into a lever motion, pulling 2 nucleotides of DNA out of the RuvA tetramer per ATP hydrolyzed, thus driving DNA branch migration. The RuvB motors rotate together with the DNA substrate, which together with the progressing nucleotide cycle form the mechanistic basis for DNA recombination by continuous HJ branch migration. Branch migration allows RuvC to scan DNA until it finds its consensus sequence, where it cleaves and resolves cruciform DNA. The protein is Holliday junction branch migration complex subunit RuvB of Carboxydothermus hydrogenoformans (strain ATCC BAA-161 / DSM 6008 / Z-2901).